Consider the following 131-residue polypeptide: D-ribose pyranase (131 aa).

The Proton donor role is filled by His20. Substrate contacts are provided by residues Asp28, His98, and Tyr120–Asn122.

This sequence belongs to the RbsD / FucU family. RbsD subfamily. As to quaternary structure, homodecamer.

The protein resides in the cytoplasm. The enzyme catalyses beta-D-ribopyranose = beta-D-ribofuranose. It functions in the pathway carbohydrate metabolism; D-ribose degradation; D-ribose 5-phosphate from beta-D-ribopyranose: step 1/2. Catalyzes the interconversion of beta-pyran and beta-furan forms of D-ribose. This chain is D-ribose pyranase, found in Clostridium perfringens (strain 13 / Type A).